Here is a 192-residue protein sequence, read N- to C-terminus: Adenylate kinase (192 aa).

10 to 18 provides a ligand contact to ATP; sequence GVPGVGGTT.

It belongs to the archaeal adenylate kinase family. As to quaternary structure, monomer.

It is found in the cytoplasm. The enzyme catalyses AMP + ATP = 2 ADP. This is Adenylate kinase from Methanococcus maripaludis (strain C7 / ATCC BAA-1331).